Here is a 260-residue protein sequence, read N- to C-terminus: MSVTVRVIPCLDVDNGRVVKGVNFEGLRDAGDPVELAKRYDALGADELTFLDVSASKDGRGTMLDVVRHTADQVFIPLTVGGGVRSEEDVDALLRAGADKVSVNSSAVARPELLRELSQRFGAQCIVLSVDARRVKDPVEADKYPSGFEVTTHGGTKSAGLDAIEWARKGEELGVGEILLNSMDGDGTKAGFDIEMLQAVRKAVSIPVIASGGAGAPDHFPPAVEAGADAVLAASIFHFGEVEIREVKQALADAGYEVRL.

Residues aspartate 12 and aspartate 131 contribute to the active site.

The protein belongs to the HisA/HisF family. In terms of assembly, heterodimer of HisH and HisF.

It localises to the cytoplasm. The catalysed reaction is 5-[(5-phospho-1-deoxy-D-ribulos-1-ylimino)methylamino]-1-(5-phospho-beta-D-ribosyl)imidazole-4-carboxamide + L-glutamine = D-erythro-1-(imidazol-4-yl)glycerol 3-phosphate + 5-amino-1-(5-phospho-beta-D-ribosyl)imidazole-4-carboxamide + L-glutamate + H(+). The protein operates within amino-acid biosynthesis; L-histidine biosynthesis; L-histidine from 5-phospho-alpha-D-ribose 1-diphosphate: step 5/9. In terms of biological role, IGPS catalyzes the conversion of PRFAR and glutamine to IGP, AICAR and glutamate. The HisF subunit catalyzes the cyclization activity that produces IGP and AICAR from PRFAR using the ammonia provided by the HisH subunit. The polypeptide is Imidazole glycerol phosphate synthase subunit HisF (Corynebacterium jeikeium (strain K411)).